A 296-amino-acid chain; its full sequence is Polyamine aminopropyltransferase (296 aa).

The 236-residue stretch at 16–251 (HLWYFEYYTG…GMWSYTFASK (236 aa)) folds into the PABS domain. Residue glutamine 46 coordinates S-methyl-5'-thioadenosine. Spermidine contacts are provided by histidine 77 and aspartate 101. S-methyl-5'-thioadenosine contacts are provided by residues glutamate 121 and 152–153 (NG). The active-site Proton acceptor is aspartate 170. Residue 170–173 (DSTD) coordinates spermidine.

Belongs to the spermidine/spermine synthase family. In terms of assembly, homotetramer.

Its subcellular location is the cytoplasm. The enzyme catalyses S-adenosyl 3-(methylsulfanyl)propylamine + putrescine = S-methyl-5'-thioadenosine + spermidine + H(+). It participates in amine and polyamine biosynthesis; spermidine biosynthesis; spermidine from putrescine: step 1/1. Strongly inhibited by S-adenosyl-1,8-diamino-3-thiooctane. Catalyzes the irreversible transfer of a propylamine group from the amino donor S-adenosylmethioninamine (decarboxy-AdoMet) to putrescine (1,4-diaminobutane) to yield spermidine. It has lower affinity and lower activity towards 1,3-diaminopropane, cadaverine (1,5-diaminopentane), agmatine, norspermidine and spermidine (in vitro). The protein is Polyamine aminopropyltransferase of Thermotoga maritima (strain ATCC 43589 / DSM 3109 / JCM 10099 / NBRC 100826 / MSB8).